Here is a 178-residue protein sequence, read N- to C-terminus: Probable chorismate pyruvate-lyase (178 aa).

Residues Arg-67, Leu-105, and Glu-164 each contribute to the substrate site.

It belongs to the UbiC family.

It localises to the cytoplasm. The catalysed reaction is chorismate = 4-hydroxybenzoate + pyruvate. It functions in the pathway cofactor biosynthesis; ubiquinone biosynthesis. Its function is as follows. Removes the pyruvyl group from chorismate, with concomitant aromatization of the ring, to provide 4-hydroxybenzoate (4HB) for the ubiquinone pathway. This is Probable chorismate pyruvate-lyase from Methylobacillus flagellatus (strain ATCC 51484 / DSM 6875 / VKM B-1610 / KT).